The chain runs to 473 residues: Arginine biosynthesis bifunctional protein ArgJ, mitochondrial (473 aa).

Substrate-binding residues include Thr201, Lys230, Thr241, Glu328, Asn468, and Thr473. Thr241 functions as the Nucleophile in the catalytic mechanism.

This sequence belongs to the ArgJ family. Heterodimer of an alpha and a beta chain. The alpha and beta chains are autoproteolytically processed from a single precursor protein within the mitochondrion.

It localises to the mitochondrion matrix. It carries out the reaction N(2)-acetyl-L-ornithine + L-glutamate = N-acetyl-L-glutamate + L-ornithine. The catalysed reaction is L-glutamate + acetyl-CoA = N-acetyl-L-glutamate + CoA + H(+). It functions in the pathway amino-acid biosynthesis; L-arginine biosynthesis; L-ornithine and N-acetyl-L-glutamate from L-glutamate and N(2)-acetyl-L-ornithine (cyclic): step 1/1. The protein operates within amino-acid biosynthesis; L-arginine biosynthesis; N(2)-acetyl-L-ornithine from L-glutamate: step 1/4. Functionally, catalyzes two activities which are involved in the cyclic version of arginine biosynthesis: the synthesis of acetylglutamate from glutamate and acetyl-CoA, and of ornithine by transacetylation between acetylornithine and glutamate. This is Arginine biosynthesis bifunctional protein ArgJ, mitochondrial from Paracoccidioides lutzii (strain ATCC MYA-826 / Pb01) (Paracoccidioides brasiliensis).